Here is a 290-residue protein sequence, read N- to C-terminus: 4-hydroxybenzoate octaprenyltransferase (290 aa).

8 consecutive transmembrane segments (helical) span residues 23-43, 46-66, 99-119, 141-161, 163-183, 212-232, 233-253, and 268-288; these read IGAL…TPGM, LWIL…GCVV, LFVV…AMTI, LPQV…FAAV, ESLP…AVAY, TLII…IGWL, NGLG…FVYQ, and AFMN…MSYW.

Belongs to the UbiA prenyltransferase family. Requires Mg(2+) as cofactor.

The protein resides in the cell inner membrane. The catalysed reaction is all-trans-octaprenyl diphosphate + 4-hydroxybenzoate = 4-hydroxy-3-(all-trans-octaprenyl)benzoate + diphosphate. The protein operates within cofactor biosynthesis; ubiquinone biosynthesis. In terms of biological role, catalyzes the prenylation of para-hydroxybenzoate (PHB) with an all-trans polyprenyl group. Mediates the second step in the final reaction sequence of ubiquinone-8 (UQ-8) biosynthesis, which is the condensation of the polyisoprenoid side chain with PHB, generating the first membrane-bound Q intermediate 3-octaprenyl-4-hydroxybenzoate. In Salmonella paratyphi C (strain RKS4594), this protein is 4-hydroxybenzoate octaprenyltransferase.